We begin with the raw amino-acid sequence, 319 residues long: Cytochrome c biogenesis protein CcsA (319 aa).

7 helical membrane-spanning segments follow: residues 9–29 (ILTH…LITL), 44–64 (GVIG…AYSG), 71–91 (LYES…FPYL), 143–163 (MVLG…LLVI), 225–245 (IISL…VWAN), 259–273 (TWAF…IYLH), and 286–306 (AIVA…VNLL).

The protein belongs to the CcmF/CycK/Ccl1/NrfE/CcsA family. In terms of assembly, may interact with Ccs1.

The protein localises to the plastid. The protein resides in the chloroplast thylakoid membrane. Its function is as follows. Required during biogenesis of c-type cytochromes (cytochrome c6 and cytochrome f) at the step of heme attachment. The chain is Cytochrome c biogenesis protein CcsA from Oenothera parviflora (Small-flowered evening primrose).